The sequence spans 83 residues: Cytochrome b559 subunit alpha (83 aa).

A helical transmembrane segment spans residues 21 to 35 (VIHSITIPSLFIAGW). Histidine 23 is a heme binding site.

This sequence belongs to the PsbE/PsbF family. Heterodimer of an alpha subunit and a beta subunit. PSII is composed of 1 copy each of membrane proteins PsbA, PsbB, PsbC, PsbD, PsbE, PsbF, PsbH, PsbI, PsbJ, PsbK, PsbL, PsbM, PsbT, PsbX, PsbY, PsbZ, Psb30/Ycf12, at least 3 peripheral proteins of the oxygen-evolving complex and a large number of cofactors. It forms dimeric complexes. The cofactor is heme b.

It localises to the plastid. It is found in the chloroplast thylakoid membrane. Its function is as follows. This b-type cytochrome is tightly associated with the reaction center of photosystem II (PSII). PSII is a light-driven water:plastoquinone oxidoreductase that uses light energy to abstract electrons from H(2)O, generating O(2) and a proton gradient subsequently used for ATP formation. It consists of a core antenna complex that captures photons, and an electron transfer chain that converts photonic excitation into a charge separation. The protein is Cytochrome b559 subunit alpha of Ginkgo biloba (Ginkgo).